Here is a 244-residue protein sequence, read N- to C-terminus: Lymphotoxin-beta (244 aa).

Residues 1–18 (MGALGLEGRGGRLQGRGS) are Cytoplasmic-facing. A helical; Signal-anchor for type II membrane protein transmembrane segment spans residues 19–48 (LLLAVAGATSLVTLLLAVPITVLAVLALVP). The Extracellular portion of the chain corresponds to 49–244 (QDQGGLVTET…KTFFGAVMVG (196 aa)). The 156-residue stretch at 88 to 243 (PAAHLIGAPL…GKTFFGAVMV (156 aa)) folds into the THD domain. A glycan (N-linked (GlcNAc...) asparagine) is linked at Asn-222.

Belongs to the tumor necrosis factor family. As to quaternary structure, heterotrimer of either two LTB and one LTA subunits or (less prevalent) two LTA and one LTB subunits.

The protein resides in the membrane. Functionally, cytokine that binds to LTBR/TNFRSF3. May play a specific role in immune response regulation. Provides the membrane anchor for the attachment of the heterotrimeric complex to the cell surface. The sequence is that of Lymphotoxin-beta (LTB) from Pan troglodytes (Chimpanzee).